Here is a 141-residue protein sequence, read N- to C-terminus: Alpha-lactalbumin (141 aa).

The signal sequence occupies residues 1–19; the sequence is MMPLVPLLLVSIVFPGIQA. A C-type lysozyme domain is found at 20 to 141; that stretch reads TQLTRCELTE…ENLEQWVCKK (122 aa). 4 cysteine pairs are disulfide-bonded: Cys-25–Cys-139, Cys-47–Cys-130, Cys-80–Cys-96, and Cys-92–Cys-110. The N-linked (GlcNAc...) asparagine glycan is linked to Asn-64. 3 residues coordinate Ca(2+): Asp-101, Asp-106, and Asp-107.

It belongs to the glycosyl hydrolase 22 family. As to quaternary structure, lactose synthase (LS) is a heterodimer of a catalytic component, beta1,4-galactosyltransferase (beta4Gal-T1) and a regulatory component, alpha-lactalbumin (LA). Mammary gland specific. Secreted in milk.

The protein resides in the secreted. In terms of biological role, regulatory subunit of lactose synthase, changes the substrate specificity of galactosyltransferase in the mammary gland making glucose a good acceptor substrate for this enzyme. This enables LS to synthesize lactose, the major carbohydrate component of milk. In other tissues, galactosyltransferase transfers galactose onto the N-acetylglucosamine of the oligosaccharide chains in glycoproteins. The protein is Alpha-lactalbumin (LALBA) of Oryctolagus cuniculus (Rabbit).